Reading from the N-terminus, the 350-residue chain is Biotin synthase 1 (350 aa).

A Radical SAM core domain is found at 71 to 296; sequence EEVEVEGIIS…KTILRFAGGR (226 aa). [4Fe-4S] cluster contacts are provided by Cys-86, Cys-90, and Cys-93. Residues Cys-129, Cys-221, and Arg-291 each contribute to the [2Fe-2S] cluster site.

This sequence belongs to the radical SAM superfamily. Biotin synthase family. Homodimer. [4Fe-4S] cluster is required as a cofactor. [2Fe-2S] cluster serves as cofactor.

The catalysed reaction is (4R,5S)-dethiobiotin + (sulfur carrier)-SH + 2 reduced [2Fe-2S]-[ferredoxin] + 2 S-adenosyl-L-methionine = (sulfur carrier)-H + biotin + 2 5'-deoxyadenosine + 2 L-methionine + 2 oxidized [2Fe-2S]-[ferredoxin]. The protein operates within cofactor biosynthesis; biotin biosynthesis; biotin from 7,8-diaminononanoate: step 2/2. Its function is as follows. Catalyzes the conversion of dethiobiotin (DTB) to biotin by the insertion of a sulfur atom into dethiobiotin via a radical-based mechanism. The sequence is that of Biotin synthase 1 from Corynebacterium diphtheriae (strain ATCC 700971 / NCTC 13129 / Biotype gravis).